A 136-amino-acid chain; its full sequence is Cell division protein SepF 3 (136 aa).

The protein belongs to the SepF family. In terms of assembly, homodimer. Interacts with FtsZ.

Its subcellular location is the cytoplasm. In terms of biological role, cell division protein that is part of the divisome complex and is recruited early to the Z-ring. Probably stimulates Z-ring formation, perhaps through the cross-linking of FtsZ protofilaments. Its function overlaps with FtsA. The protein is Cell division protein SepF 3 of Streptomyces coelicolor (strain ATCC BAA-471 / A3(2) / M145).